A 351-amino-acid polypeptide reads, in one-letter code: MSKAYEQAGVNIEAGYEAVKRMKSHVERTNRLGVMGTFGGFGGMFDLSELNLKEPVLISGTDGVGTKLKLAFMVDKHDTIGVDCVAMCVNDIVAQGAEPLYFLDYVALGKAEPAKIEQIVKGVADGCVQSGAALIGGETAEMPGLYEEDEYDLAGFAVGACEKSAIVTGERIVEGDVLIGIASSGVHSNGYSLVRKIVFADRQYAVDAIVENYEDLGPIGEALLVPTKLYAKPVLAALKAADVHGCAHVTGGGFYENLPRMMPEGLATEIDLGSWPVLRIFEFLKDKGQLEDKDLYNVFNMGIGFVIAAPAAEADKVMAAVEANGEKAYTIGRVIKGNGVVFNGTHDGSLV.

Belongs to the AIR synthase family.

It is found in the cytoplasm. The enzyme catalyses 2-formamido-N(1)-(5-O-phospho-beta-D-ribosyl)acetamidine + ATP = 5-amino-1-(5-phospho-beta-D-ribosyl)imidazole + ADP + phosphate + H(+). The protein operates within purine metabolism; IMP biosynthesis via de novo pathway; 5-amino-1-(5-phospho-D-ribosyl)imidazole from N(2)-formyl-N(1)-(5-phospho-D-ribosyl)glycinamide: step 2/2. This chain is Phosphoribosylformylglycinamidine cyclo-ligase, found in Lysinibacillus sphaericus (strain C3-41).